A 440-amino-acid polypeptide reads, in one-letter code: 23S rRNA (uracil(1939)-C(5))-methyltransferase RlmD (440 aa).

The TRAM domain occupies 8 to 69 (PQKINKLQRE…RQFGLATTKK (62 aa)). Residues C82, C88, C91, and C169 each contribute to the [4Fe-4S] cluster site. Residues Q272, F301, N306, E322, D349, and D370 each contribute to the S-adenosyl-L-methionine site. Residue C396 is the Nucleophile of the active site.

The protein belongs to the class I-like SAM-binding methyltransferase superfamily. RNA M5U methyltransferase family. RlmD subfamily.

It catalyses the reaction uridine(1939) in 23S rRNA + S-adenosyl-L-methionine = 5-methyluridine(1939) in 23S rRNA + S-adenosyl-L-homocysteine + H(+). Catalyzes the formation of 5-methyl-uridine at position 1939 (m5U1939) in 23S rRNA. This chain is 23S rRNA (uracil(1939)-C(5))-methyltransferase RlmD, found in Mannheimia succiniciproducens (strain KCTC 0769BP / MBEL55E).